Here is a 216-residue protein sequence, read N- to C-terminus: Refilin-B (216 aa).

The segment at 1–52 (MVGRLSLQDVPELVDTKKKGDGVLDSPDSGLPPSPSPSHWGLAAATGGGGER) is disordered. 2 positions are modified to phosphoserine: S6 and S26.

Belongs to the Refilin family. In terms of assembly, interacts with FLNA and FLNB.

The protein resides in the cytoplasm. The protein localises to the cytoskeleton. In terms of biological role, involved in the regulation of the perinuclear actin network and nuclear shape through interaction with filamins. Plays an essential role in the formation of cartilaginous skeletal elements. This chain is Refilin-B, found in Rattus norvegicus (Rat).